The following is a 481-amino-acid chain: Glutamyl-tRNA(Gln) amidotransferase subunit A (481 aa).

Active-site charge relay system residues include Lys-75 and Ser-150. Residue Ser-174 is the Acyl-ester intermediate of the active site.

Belongs to the amidase family. GatA subfamily. As to quaternary structure, heterotrimer of A, B and C subunits.

The catalysed reaction is L-glutamyl-tRNA(Gln) + L-glutamine + ATP + H2O = L-glutaminyl-tRNA(Gln) + L-glutamate + ADP + phosphate + H(+). Allows the formation of correctly charged Gln-tRNA(Gln) through the transamidation of misacylated Glu-tRNA(Gln) in organisms which lack glutaminyl-tRNA synthetase. The reaction takes place in the presence of glutamine and ATP through an activated gamma-phospho-Glu-tRNA(Gln). In Macrococcus caseolyticus (strain JCSC5402) (Macrococcoides caseolyticum), this protein is Glutamyl-tRNA(Gln) amidotransferase subunit A.